The following is a 104-amino-acid chain: MQKIRKGDKVVVLAGKDKGRSGEVLSVQPKDDTALVRGVNMIRRHQKQSQSQEGGIITKEAPIQLSNIALADPKDGKPTRVGFIFQKDGKKVRVAKRSGEVING.

It belongs to the universal ribosomal protein uL24 family. Part of the 50S ribosomal subunit.

In terms of biological role, one of two assembly initiator proteins, it binds directly to the 5'-end of the 23S rRNA, where it nucleates assembly of the 50S subunit. Its function is as follows. One of the proteins that surrounds the polypeptide exit tunnel on the outside of the subunit. This chain is Large ribosomal subunit protein uL24, found in Mesorhizobium japonicum (strain LMG 29417 / CECT 9101 / MAFF 303099) (Mesorhizobium loti (strain MAFF 303099)).